The following is a 331-amino-acid chain: Lipoyl synthase (331 aa).

A disordered region spans residues 1-33 (MSDALIATSSEAPQSPAEQYDPTRKQKSADKTA). The segment covering 7 to 17 (ATSSEAPQSPA) has biased composition (polar residues). Over residues 21–33 (DPTRKQKSADKTA) the composition is skewed to basic and acidic residues. [4Fe-4S] cluster is bound by residues Cys-78, Cys-83, Cys-89, Cys-104, Cys-108, Cys-111, and Ser-318. One can recognise a Radical SAM core domain in the interval 89–307 (CFGKGTATFM…EEEAYKMGFT (219 aa)).

It belongs to the radical SAM superfamily. Lipoyl synthase family. [4Fe-4S] cluster serves as cofactor.

It localises to the cytoplasm. It carries out the reaction [[Fe-S] cluster scaffold protein carrying a second [4Fe-4S](2+) cluster] + N(6)-octanoyl-L-lysyl-[protein] + 2 oxidized [2Fe-2S]-[ferredoxin] + 2 S-adenosyl-L-methionine + 4 H(+) = [[Fe-S] cluster scaffold protein] + N(6)-[(R)-dihydrolipoyl]-L-lysyl-[protein] + 4 Fe(3+) + 2 hydrogen sulfide + 2 5'-deoxyadenosine + 2 L-methionine + 2 reduced [2Fe-2S]-[ferredoxin]. It functions in the pathway protein modification; protein lipoylation via endogenous pathway; protein N(6)-(lipoyl)lysine from octanoyl-[acyl-carrier-protein]: step 2/2. Catalyzes the radical-mediated insertion of two sulfur atoms into the C-6 and C-8 positions of the octanoyl moiety bound to the lipoyl domains of lipoate-dependent enzymes, thereby converting the octanoylated domains into lipoylated derivatives. The protein is Lipoyl synthase of Cupriavidus necator (strain ATCC 17699 / DSM 428 / KCTC 22496 / NCIMB 10442 / H16 / Stanier 337) (Ralstonia eutropha).